An 894-amino-acid polypeptide reads, in one-letter code: B-cell lymphoma/leukemia 11B (894 aa).

Phosphoserine is present on residues Ser-97 and Ser-110. At Thr-120 the chain carries Phosphothreonine. Ser-129 is modified (phosphoserine). A Glycyl lysine isopeptide (Lys-Gly) (interchain with G-Cter in SUMO2) cross-link involves residue Lys-137. The segment at 221–251 (YICTTCKQPFNSAWFLLQHAQNTHGFRIYLE) adopts a C2H2-type 1 zinc-finger fold. Ser-256 carries the phosphoserine modification. Phosphothreonine is present on Thr-260. Position 277 is a phosphoserine (Ser-277). Arg-293 carries the post-translational modification Omega-N-methylarginine. Residue Arg-322 is modified to Asymmetric dimethylarginine. At Ser-358 the chain carries Phosphoserine. Disordered stretches follow at residues 370-428 (LAGN…KSKS) and 471-583 (KRHM…GGGA). At Thr-376 the chain carries Phosphothreonine. A phosphoserine mark is found at Ser-381, Ser-398, and Ser-401. The segment covering 396-423 (QPSPKSPFLSTPPLPPMPPGGTPPPQPP) has biased composition (pro residues). Residues Thr-406 and Thr-417 each carry the phosphothreonine modification. 2 C2H2-type zinc fingers span residues 427–454 (KSCE…GEKP) and 455–482 (YKCQ…HKAG). A compositionally biased stretch (basic residues) spans 471 to 480 (KRHMKTHMHK). 4 positions are modified to phosphoserine: Ser-483, Ser-488, Ser-496, and Ser-497. Over residues 511–529 (KAADGDFRHHESDPSLGHE) the composition is skewed to basic and acidic residues. Over residues 530-546 (PEEEDEEEEEEEEELLL) the composition is skewed to acidic residues. The span at 568–583 (NGGGGVPGVPGAGGGA) shows a compositional bias: gly residues. Residues Lys-591 and Lys-617 each participate in a glycyl lysine isopeptide (Lys-Gly) (interchain with G-Cter in SUMO2) cross-link. The segment at 653–680 (GRGGGFAPGTEPFPGLFPRKPAPLPSPG) is disordered. Phosphoserine is present on Ser-678. Glycyl lysine isopeptide (Lys-Gly) (interchain with G-Cter in SUMO2) cross-links involve residues Lys-686 and Lys-723. Positions 737–752 (FATSSEHSSENGSLRF) are enriched in polar residues. Positions 737–794 (FATSSEHSSENGSLRFSTPPGDLLDGGLSGRSGTASGGSTPHLGGPGPGRPSSKEGRR) are disordered. Over residues 753–775 (STPPGDLLDGGLSGRSGTASGGS) the composition is skewed to low complexity. Thr-754 is subject to Phosphothreonine. 2 positions are modified to phosphoserine: Ser-765 and Ser-772. C2H2-type zinc fingers lie at residues 796 to 823 (DTCE…GERP), 824 to 853 (YKCE…GKEV), and 854 to 884 (YRCD…LLTN). N6-acetyllysine is present on Lys-851. A Glycyl lysine isopeptide (Lys-Gly) (interchain with G-Cter in SUMO2) cross-link involves residue Lys-887.

As to quaternary structure, interacts with TFCOUP1, SIRT1, ARP1 and EAR2. Interacts with EP300; the interaction is detected in activated T-lymphocytes, but not under resting conditions. In terms of processing, sumoylated with SUMO1. In terms of tissue distribution, highly expressed in brain and in malignant T-cell lines derived from patients with adult T-cell leukemia/lymphoma.

Its subcellular location is the nucleus. Key regulator of both differentiation and survival of T-lymphocytes during thymocyte development in mammals. Essential in controlling the responsiveness of hematopoietic stem cells to chemotactic signals by modulating the expression of the receptors CCR7 and CCR9, which direct the movement of progenitor cells from the bone marrow to the thymus. Is a regulator of IL2 promoter and enhances IL2 expression in activated CD4(+) T-lymphocytes. Tumor-suppressor that represses transcription through direct, TFCOUP2-independent binding to a GC-rich response element. May also function in the P53-signaling pathway. The sequence is that of B-cell lymphoma/leukemia 11B (BCL11B) from Homo sapiens (Human).